Consider the following 304-residue polypeptide: tRNA-uridine aminocarboxypropyltransferase 1 (304 aa).

Position 2 is an N-acetylserine (Ser-2). A DXTW motif is present at residues 206-209 (DSTW).

This sequence belongs to the TDD superfamily. DTWD1 family.

It is found in the nucleus. The enzyme catalyses a uridine in tRNA + S-adenosyl-L-methionine = a 3-[(3S)-3-amino-3-carboxypropyl]uridine in tRNA + S-methyl-5'-thioadenosine + H(+). Catalyzes the formation of 3-(3-amino-3-carboxypropyl)uridine (acp3U) at position 20 in the D-loop of several cytoplasmic tRNAs (acp3U(20)). This Homo sapiens (Human) protein is tRNA-uridine aminocarboxypropyltransferase 1.